Reading from the N-terminus, the 196-residue chain is MKVYKAQLIKTVYKIEDLPPPDKKEIAFAGRSNVGKSSFLNAILGIKIAKVSSTPGKTRSINYYLVNDKYYFVDLPGYGFASVSKQEKERWNVLMNEYFKTRFSLSAVSLLIDHRHMPQKLDYAMVEWLKDLGTPFLFILTKSDKLTKSEKAKLFEDIKRSFSTYGEYIYMPFSSKTKEGLKEVLKTIGEILGDND.

Residues 22-194 (DKKEIAFAGR…LKTIGEILGD (173 aa)) enclose the EngB-type G domain. Residues 30 to 37 (GRSNVGKS), 56 to 60 (GKTRS), 74 to 77 (DLPG), 141 to 144 (TKSD), and 173 to 175 (FSS) each bind GTP. Ser37 and Thr58 together coordinate Mg(2+).

This sequence belongs to the TRAFAC class TrmE-Era-EngA-EngB-Septin-like GTPase superfamily. EngB GTPase family. Mg(2+) is required as a cofactor.

Necessary for normal cell division and for the maintenance of normal septation. In Petrotoga mobilis (strain DSM 10674 / SJ95), this protein is Probable GTP-binding protein EngB.